We begin with the raw amino-acid sequence, 69 residues long: uncharacterized protein (69 aa).

This is an uncharacterized protein from Salmonella paratyphi A (strain ATCC 9150 / SARB42).